Here is a 109-residue protein sequence, read N- to C-terminus: Flagellar hook-basal body complex protein FliE (109 aa).

The protein belongs to the FliE family.

The protein resides in the bacterial flagellum basal body. This chain is Flagellar hook-basal body complex protein FliE, found in Pseudomonas syringae pv. tomato (strain ATCC BAA-871 / DC3000).